Here is a 148-residue protein sequence, read N- to C-terminus: 3-dehydroquinate dehydratase (148 aa).

Residue Y24 is the Proton acceptor of the active site. Substrate is bound by residues N75, H81, and D88. The active-site Proton donor is the H101. Substrate is bound by residues 102 to 103 and R112; that span reads LS.

Belongs to the type-II 3-dehydroquinase family. Homododecamer.

It catalyses the reaction 3-dehydroquinate = 3-dehydroshikimate + H2O. It participates in metabolic intermediate biosynthesis; chorismate biosynthesis; chorismate from D-erythrose 4-phosphate and phosphoenolpyruvate: step 3/7. Its function is as follows. Catalyzes a trans-dehydration via an enolate intermediate. The chain is 3-dehydroquinate dehydratase from Sinorhizobium medicae (strain WSM419) (Ensifer medicae).